Here is a 278-residue protein sequence, read N- to C-terminus: 3-methyl-2-oxobutanoate hydroxymethyltransferase (278 aa).

Residues aspartate 49 and aspartate 88 each coordinate Mg(2+). 3-methyl-2-oxobutanoate-binding positions include 49 to 50 (DS), aspartate 88, and lysine 118. Glutamate 120 provides a ligand contact to Mg(2+). Glutamate 186 functions as the Proton acceptor in the catalytic mechanism.

Belongs to the PanB family. In terms of assembly, homodecamer; pentamer of dimers. Mg(2+) is required as a cofactor.

It is found in the cytoplasm. The enzyme catalyses 3-methyl-2-oxobutanoate + (6R)-5,10-methylene-5,6,7,8-tetrahydrofolate + H2O = 2-dehydropantoate + (6S)-5,6,7,8-tetrahydrofolate. It participates in cofactor biosynthesis; (R)-pantothenate biosynthesis; (R)-pantoate from 3-methyl-2-oxobutanoate: step 1/2. In terms of biological role, catalyzes the reversible reaction in which hydroxymethyl group from 5,10-methylenetetrahydrofolate is transferred onto alpha-ketoisovalerate to form ketopantoate. The polypeptide is 3-methyl-2-oxobutanoate hydroxymethyltransferase (Bordetella parapertussis (strain 12822 / ATCC BAA-587 / NCTC 13253)).